The chain runs to 55 residues: Large ribosomal subunit protein bL33 (55 aa).

This sequence belongs to the bacterial ribosomal protein bL33 family.

This Methylacidiphilum infernorum (isolate V4) (Methylokorus infernorum (strain V4)) protein is Large ribosomal subunit protein bL33.